The sequence spans 503 residues: Glycerol kinase (503 aa).

Residue threonine 14 coordinates ADP. ATP-binding residues include threonine 14, threonine 15, and serine 16. Residue threonine 14 participates in sn-glycerol 3-phosphate binding. Position 18 (arginine 18) interacts with ADP. Positions 84, 85, 136, and 246 each coordinate sn-glycerol 3-phosphate. Glycerol-binding residues include arginine 84, glutamate 85, tyrosine 136, aspartate 246, and glutamine 247. Threonine 268 and glycine 311 together coordinate ADP. ATP is bound by residues threonine 268, glycine 311, glutamine 315, and glycine 412. Glycine 412 and asparagine 416 together coordinate ADP. Basic and acidic residues predominate over residues 468–481; the sequence is ERTFSPDSDNEKRE. Positions 468-489 are disordered; that stretch reads ERTFSPDSDNEKRERRYKGWKK.

It belongs to the FGGY kinase family.

It carries out the reaction glycerol + ATP = sn-glycerol 3-phosphate + ADP + H(+). It functions in the pathway polyol metabolism; glycerol degradation via glycerol kinase pathway; sn-glycerol 3-phosphate from glycerol: step 1/1. Inhibited by fructose 1,6-bisphosphate (FBP). In terms of biological role, key enzyme in the regulation of glycerol uptake and metabolism. Catalyzes the phosphorylation of glycerol to yield sn-glycerol 3-phosphate. The chain is Glycerol kinase from Haemophilus influenzae (strain ATCC 51907 / DSM 11121 / KW20 / Rd).